We begin with the raw amino-acid sequence, 205 residues long: Pyrrolidone-carboxylate peptidase (205 aa).

Catalysis depends on residues Glu79, Cys142, and His165.

This sequence belongs to the peptidase C15 family. In terms of assembly, homotetramer.

It is found in the cytoplasm. The enzyme catalyses Release of an N-terminal pyroglutamyl group from a polypeptide, the second amino acid generally not being Pro.. Removes 5-oxoproline from various penultimate amino acid residues except L-proline. The protein is Pyrrolidone-carboxylate peptidase of Gloeobacter violaceus (strain ATCC 29082 / PCC 7421).